We begin with the raw amino-acid sequence, 217 residues long: MTQISPTRLHSPLDRLLVEAQRALDTVFGNPPAERPNPAADTPDVVLDPEQRLHAAGLMRINHVGEVCAQGLYFGQAAVARDAHTRHHLLEAAQEETDHLAWCADRLHELDSRPSLFNPVWYAGSYALGALAGLRGDDWSLGFVVETERQVEAHLDEHLETLPQSDQRSRAILRVMKIDEARHADQAEQAGARPLPAPIPSAMALASKLMKTVAYRL.

The Fe cation site is built by glutamate 66, glutamate 96, histidine 99, glutamate 148, glutamate 180, and histidine 183.

This sequence belongs to the COQ7 family. Fe cation serves as cofactor.

It is found in the cell membrane. It carries out the reaction a 5-methoxy-2-methyl-3-(all-trans-polyprenyl)benzene-1,4-diol + AH2 + O2 = a 3-demethylubiquinol + A + H2O. Its pathway is cofactor biosynthesis; ubiquinone biosynthesis. Functionally, catalyzes the hydroxylation of 2-nonaprenyl-3-methyl-6-methoxy-1,4-benzoquinol during ubiquinone biosynthesis. The protein is 3-demethoxyubiquinol 3-hydroxylase of Xanthomonas axonopodis pv. citri (strain 306).